Here is a 264-residue protein sequence, read N- to C-terminus: uncharacterized protein (264 aa).

An N-terminal signal peptide occupies residues 1 to 16 (MKGKSALTLLLAGIFS). Cysteine 17 is lipidated: N-palmitoyl cysteine. Cysteine 17 carries the S-diacylglycerol cysteine lipid modification.

It is found in the cell inner membrane. This is an uncharacterized protein from Escherichia coli (strain K12).